The following is a 261-amino-acid chain: Cytochrome c oxidase subunit 3 (261 aa).

Residues 1-15 are Mitochondrial matrix-facing; that stretch reads MTHQTHAYHMVNPSP. Residues 16–34 traverse the membrane as a helical segment; that stretch reads WPLTGALSALLMTSGLIMW. Topologically, residues 35 to 40 are mitochondrial intermembrane; the sequence is FHFNST. Residues 41–66 traverse the membrane as a helical segment; the sequence is TLLMLGLTTNMLTMYQWWRDVIREST. At 67–72 the chain is on the mitochondrial matrix side; the sequence is FQGHHT. A helical transmembrane segment spans residues 73-105; it reads PNVQKGLRYGMILFIISEVLFFTGFFWAFYHSS. Residues 106–128 are Mitochondrial intermembrane-facing; it reads LAPTPELGGCWPPTGIHPLNPLE. Residues 129–152 traverse the membrane as a helical segment; sequence VPLLNTSVLLASGVSITWAHHSLM. Over 153 to 155 the chain is Mitochondrial matrix; that stretch reads EGN. The chain crosses the membrane as a helical span at residues 156–183; sequence RNHMLQALFITIALGVYFTLLQASEYYE. Residues 184 to 190 lie on the Mitochondrial intermembrane side of the membrane; that stretch reads APFTISD. A helical membrane pass occupies residues 191–223; that stretch reads GVYGSTFFVATGFHGLHVIIGSTFLIVCFFRQL. The Mitochondrial matrix portion of the chain corresponds to 224-232; sequence KFHFTSSHH. A helical membrane pass occupies residues 233–256; the sequence is FGFEAAAWYWHFVDVVWLFLYVSI. Over 257–261 the chain is Mitochondrial intermembrane; that stretch reads YWWGS.

Belongs to the cytochrome c oxidase subunit 3 family. In terms of assembly, component of the cytochrome c oxidase (complex IV, CIV), a multisubunit enzyme composed of 14 subunits. The complex is composed of a catalytic core of 3 subunits MT-CO1, MT-CO2 and MT-CO3, encoded in the mitochondrial DNA, and 11 supernumerary subunits COX4I, COX5A, COX5B, COX6A, COX6B, COX6C, COX7A, COX7B, COX7C, COX8 and NDUFA4, which are encoded in the nuclear genome. The complex exists as a monomer or a dimer and forms supercomplexes (SCs) in the inner mitochondrial membrane with NADH-ubiquinone oxidoreductase (complex I, CI) and ubiquinol-cytochrome c oxidoreductase (cytochrome b-c1 complex, complex III, CIII), resulting in different assemblies (supercomplex SCI(1)III(2)IV(1) and megacomplex MCI(2)III(2)IV(2)).

It is found in the mitochondrion inner membrane. The enzyme catalyses 4 Fe(II)-[cytochrome c] + O2 + 8 H(+)(in) = 4 Fe(III)-[cytochrome c] + 2 H2O + 4 H(+)(out). Its function is as follows. Component of the cytochrome c oxidase, the last enzyme in the mitochondrial electron transport chain which drives oxidative phosphorylation. The respiratory chain contains 3 multisubunit complexes succinate dehydrogenase (complex II, CII), ubiquinol-cytochrome c oxidoreductase (cytochrome b-c1 complex, complex III, CIII) and cytochrome c oxidase (complex IV, CIV), that cooperate to transfer electrons derived from NADH and succinate to molecular oxygen, creating an electrochemical gradient over the inner membrane that drives transmembrane transport and the ATP synthase. Cytochrome c oxidase is the component of the respiratory chain that catalyzes the reduction of oxygen to water. Electrons originating from reduced cytochrome c in the intermembrane space (IMS) are transferred via the dinuclear copper A center (CU(A)) of subunit 2 and heme A of subunit 1 to the active site in subunit 1, a binuclear center (BNC) formed by heme A3 and copper B (CU(B)). The BNC reduces molecular oxygen to 2 water molecules using 4 electrons from cytochrome c in the IMS and 4 protons from the mitochondrial matrix. This is Cytochrome c oxidase subunit 3 (MT-CO3) from Gazella bennettii (Chinkara).